The following is a 183-amino-acid chain: Probable GTP-binding protein EngB (183 aa).

The 166-residue stretch at 18-183 (DQNEIVFWGR…LSDLVEHFEL (166 aa)) folds into the EngB-type G domain. GTP-binding positions include 26–33 (GRSNVGKS), 52–56 (GRTRL), 70–73 (DLPG), 137–140 (TKID), and 166–168 (VSS). Mg(2+) contacts are provided by serine 33 and threonine 54.

It belongs to the TRAFAC class TrmE-Era-EngA-EngB-Septin-like GTPase superfamily. EngB GTPase family. The cofactor is Mg(2+).

Necessary for normal cell division and for the maintenance of normal septation. The chain is Probable GTP-binding protein EngB from Metamycoplasma arthritidis (strain 158L3-1) (Mycoplasma arthritidis).